Here is a 447-residue protein sequence, read N- to C-terminus: Glutamate--tRNA ligase 1 (447 aa).

The 'HIGH' region motif lies at 10–20 (PSPTGMLHVGN). Positions 240 to 244 (KISKR) match the 'KMSKS' region motif. Lysine 243 contacts ATP.

The protein belongs to the class-I aminoacyl-tRNA synthetase family. Glutamate--tRNA ligase type 1 subfamily. Monomer.

It is found in the cytoplasm. It carries out the reaction tRNA(Glu) + L-glutamate + ATP = L-glutamyl-tRNA(Glu) + AMP + diphosphate. In terms of biological role, catalyzes the attachment of glutamate to tRNA(Glu) in a two-step reaction: glutamate is first activated by ATP to form Glu-AMP and then transferred to the acceptor end of tRNA(Glu). The chain is Glutamate--tRNA ligase 1 from Rickettsia massiliae (strain Mtu5).